Consider the following 396-residue polypeptide: S-adenosylmethionine synthase (396 aa).

Position 14 (H14) interacts with ATP. D16 provides a ligand contact to Mg(2+). K(+) is bound at residue E42. Residues E55 and Q98 each contribute to the L-methionine site. The interval 98–108 (QSPDIAQGVHG) is flexible loop. ATP contacts are provided by residues 167–169 (DAK), 234–235 (RF), D243, 249–250 (RK), S266, and K270. D243 lines the L-methionine pocket. L-methionine is bound at residue K274.

The protein belongs to the AdoMet synthase family. Homotetramer; dimer of dimers. Mg(2+) serves as cofactor. K(+) is required as a cofactor.

Its subcellular location is the cytoplasm. The enzyme catalyses L-methionine + ATP + H2O = S-adenosyl-L-methionine + phosphate + diphosphate. The protein operates within amino-acid biosynthesis; S-adenosyl-L-methionine biosynthesis; S-adenosyl-L-methionine from L-methionine: step 1/1. Catalyzes the formation of S-adenosylmethionine (AdoMet) from methionine and ATP. The overall synthetic reaction is composed of two sequential steps, AdoMet formation and the subsequent tripolyphosphate hydrolysis which occurs prior to release of AdoMet from the enzyme. The protein is S-adenosylmethionine synthase of Treponema pallidum (strain Nichols).